Consider the following 512-residue polypeptide: Cytochrome P450 72A11 (512 aa).

Residues 2-22 (EISVASVTVSVAVVVVSWWVW) traverse the membrane as a helical segment. Position 460 (Cys-460) interacts with heme.

Belongs to the cytochrome P450 family. The cofactor is heme.

It localises to the membrane. In Arabidopsis thaliana (Mouse-ear cress), this protein is Cytochrome P450 72A11 (CYP72A11).